The primary structure comprises 158 residues: G-protein-signaling modulator 3 (158 aa).

Residues 1-53 (MEAERPQEDGEQSLPQDDQGWPPVNSTARPWRSAPPSPPPPGTRHTALGPRSG) form a disordered region. Residues S33 and S37 each carry the phosphoserine modification. The span at 33–42 (SAPPSPPPPG) shows a compositional bias: pro residues. Over residues 43–53 (TRHTALGPRSG) the composition is skewed to low complexity. Phosphoserine is present on residues S54 and S57. The residue at position 60 (T60) is a Phosphothreonine. A GoLoco 1 domain is found at 60-82 (TELLLDLVAEAQSRRLEEQRAAF). The segment at 78 to 97 (QRAAFHTPKVPPSLAPTPPR) is disordered. Positions 86-96 (KVPPSLAPTPP) are enriched in pro residues. GoLoco domains are found at residues 102–124 (KEQL…RSDP) and 130–153 (GQEL…RSRP).

Its subcellular location is the cytoplasm. Its function is as follows. Interacts with subunit of G(i) alpha proteins and regulates the activation of G(i) alpha proteins. The protein is G-protein-signaling modulator 3 (Gpsm3) of Rattus norvegicus (Rat).